We begin with the raw amino-acid sequence, 709 residues long: Tyrosine-protein phosphatase cdc-14 (709 aa).

One can recognise a Tyrosine-protein phosphatase domain in the interval aspartate 196 to serine 354. The Phosphocysteine intermediate role is filled by cysteine 295. The Nuclear localization signal signature appears at lysine 366 to arginine 371. The Nuclear export signal motif lies at leucine 372 to leucine 381. Disordered stretches follow at residues valine 403 to threonine 541, arginine 573 to proline 594, and glutamate 628 to serine 661. Positions glutamine 404 to proline 413 are enriched in polar residues. Over residues threonine 463 to threonine 479 the composition is skewed to low complexity. 2 stretches are compositionally biased toward polar residues: residues proline 480–leucine 490 and proline 501–glycine 521. Over residues arginine 526 to threonine 541 the composition is skewed to low complexity. Positions proline 639–lysine 649 are enriched in polar residues.

The protein belongs to the protein-tyrosine phosphatase family. Non-receptor class CDC14 subfamily.

The protein resides in the cytoplasm. The protein localises to the cytoskeleton. Its subcellular location is the microtubule organizing center. It localises to the centrosome. It is found in the spindle. The protein resides in the midbody. The protein localises to the nucleus. It catalyses the reaction O-phospho-L-tyrosyl-[protein] + H2O = L-tyrosyl-[protein] + phosphate. Inhibited by sodium orthovanadate. Weakly inhibited by sodium fluoride and okadaic acid. Functionally, protein phosphatase that negatively regulates the G1-to-S phase transition to inhibit the cell cycle and establish quiescence in cells of multiple lineages including vulval, hypodermal and intestinal. Promotes nuclear accumulation and activity of the cyclin-dependent kinase inhibitor cki-1 which leads to inhibition of G1 progression during vulval tissue development. Has been shown to not be required for cytokinesis. However, in the embryo, in a contrasting study, has been shown to act as a regulator of central spindle formation and cytokinesis, and may be required for localization of the spindle component zen-4, and its interacting partner air-2 at the spindle during late cell divisions. Its function is as follows. Main regulator of cell cycle arrest in vulval precursor cells. The polypeptide is Tyrosine-protein phosphatase cdc-14 (Caenorhabditis elegans).